A 386-amino-acid polypeptide reads, in one-letter code: Putative membrane-bound transacylase BcsY (386 aa).

10 helical membrane passes run Leu-37 to Val-57, Leu-91 to Leu-111, Ile-118 to Val-138, Leu-156 to Thr-176, Leu-181 to Gly-201, Ala-237 to Tyr-257, Ala-258 to Pro-278, Leu-290 to Val-310, Ala-322 to Val-342, and Ala-362 to Val-382.

It belongs to the acyltransferase 3 family.

Its subcellular location is the cell inner membrane. Its pathway is glycan metabolism; bacterial cellulose biosynthesis. May acylate a glucose moiety into cellulose fibrils, in cooperation with BcsABII and BcsCII. This Komagataeibacter xylinus (Gluconacetobacter xylinus) protein is Putative membrane-bound transacylase BcsY (bcsY).